Here is a 424-residue protein sequence, read N- to C-terminus: Proline--tRNA ligase (424 aa).

Belongs to the class-II aminoacyl-tRNA synthetase family. ProS type 2 subfamily. In terms of assembly, homodimer.

The protein resides in the cytoplasm. It catalyses the reaction tRNA(Pro) + L-proline + ATP = L-prolyl-tRNA(Pro) + AMP + diphosphate. Functionally, catalyzes the attachment of proline to tRNA(Pro) in a two-step reaction: proline is first activated by ATP to form Pro-AMP and then transferred to the acceptor end of tRNA(Pro). The polypeptide is Proline--tRNA ligase (Ehrlichia canis (strain Jake)).